Consider the following 320-residue polypeptide: Ribosome production factor 2 homolog (320 aa).

In terms of domain architecture, Brix spans arginine 30 to aspartate 234. The tract at residues leucine 268–serine 320 is disordered. Over residues leucine 302–alanine 311 the composition is skewed to low complexity.

It belongs to the RPF2 family.

It is found in the nucleus. The protein localises to the nucleolus. Required for normal assembly of the mitotic spindle. May be involved in both centrosome-dependent and centrosome-independent spindle assembly programs. This is Ribosome production factor 2 homolog from Drosophila melanogaster (Fruit fly).